A 560-amino-acid chain; its full sequence is Kinesin light chain 1 (560 aa).

The stretch at 27–156 (KTKQVIQGLE…HLEFMNQLKK (130 aa)) forms a coiled coil. Residues 156–176 (KYDDDISPSEDKDSDSSKEPL) are compositionally biased toward basic and acidic residues. The segment at 156–203 (KYDDDISPSEDKDSDSSKEPLDDLFPNDEDDPGQGIQQQHSSAAAAAQ) is disordered. The residue at position 162 (Ser-162) is a Phosphoserine. Residues 188–203 (GQGIQQQHSSAAAAAQ) show a composition bias toward low complexity. 5 TPR repeats span residues 213-246 (LRTL…LEKT), 255-288 (ATML…REKT), 297-330 (AATL…REKV), 339-372 (AKQL…YQTK), and 381-414 (AKTK…AHER). Tyr-449 bears the Phosphotyrosine mark. Ser-460 bears the Phosphoserine mark. The TPR 6 repeat unit spans residues 464–497 (TTTLKNLGALYRRQGKFEAAETLEEAALRSRKQG). Ser-521 and Ser-524 each carry phosphoserine.

It belongs to the kinesin light chain family. Oligomeric complex composed of two heavy chains and two light chains. Interacts with SPAG9. Interacts with ATCAY; may link mitochondria to KLC1 and regulate mitochondria localization into neuron projections. Interacts (via TPR repeats) with TOR1A; the interaction associates TOR1A with the kinesin oligomeric complex. Interacts with BORCS5. Interacts with MAPK8IP3/JIP3 and NTRK2/TRKB; interaction with NTRK2/TRKB is mediated by MAPK8IP3/JIP3. Interacts with CLSTN1; phosphorylation at Ser-460 inhibits interaction with CLSTN1. In terms of processing, phosphorylation at Ser-460 by ERK inhibits interaction with CLSTN1 and localization to cytoplasmic vesicles. Expressed in brain (at protein level).

It localises to the cell projection. It is found in the growth cone. Its subcellular location is the cytoplasmic vesicle. The protein localises to the cytoplasm. The protein resides in the cytoskeleton. Its function is as follows. Kinesin is a microtubule-associated force-producing protein that may play a role in organelle transport. The light chain may function in coupling of cargo to the heavy chain or in the modulation of its ATPase activity. The polypeptide is Kinesin light chain 1 (Klc1) (Rattus norvegicus (Rat)).